The sequence spans 351 residues: Photosystem II D2 protein (351 aa).

Residues 39–59 (TAYLAIGGWLTGTTFVTSWYT) traverse the membrane as a helical segment. His116 is a binding site for chlorophyll a. A helical transmembrane segment spans residues 123–139 (GFMLRQFELARLIGIRP). Residues Gln128 and Asn141 each contribute to the pheophytin a site. Residues 151–164 (VFVSVFLLYPLGQS) form a helical membrane-spanning segment. His196 lines the chlorophyll a pocket. The helical transmembrane segment at 206 to 226 (GALLSAIHGVTVENTLYEDGE) threads the bilayer. His213 and Phe260 together coordinate a plastoquinone. His213 contacts Fe cation. Fe cation is bound at residue His267. A helical transmembrane segment spans residues 277–293 (GLWTSSIGIIGLALNLR).

It belongs to the reaction center PufL/M/PsbA/D family. PSII is composed of 1 copy each of membrane proteins PsbA, PsbB, PsbC, PsbD, PsbE, PsbF, PsbH, PsbI, PsbJ, PsbK, PsbL, PsbM, PsbT, PsbX, PsbY, PsbZ, Psb30/Ycf12, peripheral proteins PsbO, CyanoQ (PsbQ), PsbU, PsbV and a large number of cofactors. It forms dimeric complexes. The cofactor is The D1/D2 heterodimer binds P680, chlorophylls that are the primary electron donor of PSII, and subsequent electron acceptors. It shares a non-heme iron and each subunit binds pheophytin, quinone, additional chlorophylls, carotenoids and lipids. There is also a Cl(-1) ion associated with D1 and D2, which is required for oxygen evolution. The PSII complex binds additional chlorophylls, carotenoids and specific lipids..

The protein localises to the host cellular thylakoid membrane. It carries out the reaction 2 a plastoquinone + 4 hnu + 2 H2O = 2 a plastoquinol + O2. Photosystem II (PSII) is a light-driven water:plastoquinone oxidoreductase that uses light energy to abstract electrons from H(2)O, generating O(2) and a proton gradient subsequently used for ATP formation. It consists of a core antenna complex that captures photons, and an electron transfer chain that converts photonic excitation into a charge separation. The D1/D2 (PsbA/PsbD) reaction center heterodimer binds P680, the primary electron donor of PSII as well as several subsequent electron acceptors. D2 is needed for assembly of a stable PSII complex. This chain is Photosystem II D2 protein (psbD), found in Synechococcus.